A 140-amino-acid chain; its full sequence is MFLKSELLECNGSSVTLFQLSALQRIEHLEYLKQLEAVEVGDFQAAITFTVKSGAYLVAMSLWHGHPLKGSQGENAAAEVAKIQDEVMQTWPTELVAEAEYKVKLLSGMIAPVIDEPTSSGEERNEPAEPVTAEKPSPVS.

Residues 114–140 (IDEPTSSGEERNEPAEPVTAEKPSPVS) are disordered.

It belongs to the lambda-like tail assembly protein family. In terms of assembly, interacts with the tail assembly protein GT and the tape measure protein.

The protein localises to the host cytoplasm. Functionally, promotes tail assembly by creating a scaffold for the tail tube proteins. Tail assembly proteins G and GT probably wrap the linear tape measure protein to create a tail assembly scaffold. This allows the polymerization of the tail tube protein, during which G and GT are released, therefore they are absent in the mature virion. The tail assembly protein GT is produced by a rare -1 ribosomal frameshift. The ratio of translated G/GT is about 20, and this ratio is important for proper tail assembly. This chain is Tail assembly protein G, found in Escherichia coli (Bacteriophage N15).